A 399-amino-acid chain; its full sequence is Chorismate synthase (399 aa).

The segment at 41–72 (IQKDLDRRKPGQSMITTSRGEPDKVTINSGIQ) is disordered. Arg-48 contacts NADP(+). Residues 125–127 (RSS), Gly-288, 303–307 (HAPVS), and Arg-330 contribute to the FMN site. Composition is skewed to basic and acidic residues over residues 363 to 377 (PDRLDGRPGEYDTDY) and 389 to 399 (ADTHAKTIDDD). The disordered stretch occupies residues 363 to 399 (PDRLDGRPGEYDTDYHPSSPQNDPEDADTHAKTIDDD).

This sequence belongs to the chorismate synthase family. FMNH2 is required as a cofactor.

The enzyme catalyses 5-O-(1-carboxyvinyl)-3-phosphoshikimate = chorismate + phosphate. It functions in the pathway metabolic intermediate biosynthesis; chorismate biosynthesis; chorismate from D-erythrose 4-phosphate and phosphoenolpyruvate: step 7/7. In terms of biological role, catalyzes the anti-1,4-elimination of the C-3 phosphate and the C-6 proR hydrogen from 5-enolpyruvylshikimate-3-phosphate (EPSP) to yield chorismate, which is the branch point compound that serves as the starting substrate for the three terminal pathways of aromatic amino acid biosynthesis. This reaction introduces a second double bond into the aromatic ring system. The protein is Chorismate synthase of Haloarcula marismortui (strain ATCC 43049 / DSM 3752 / JCM 8966 / VKM B-1809) (Halobacterium marismortui).